The primary structure comprises 123 residues: Large ribosomal subunit protein uL29 (123 aa).

Belongs to the universal ribosomal protein uL29 family. Component of the large ribosomal subunit.

It localises to the cytoplasm. In terms of biological role, component of the large ribosomal subunit. The ribosome is a large ribonucleoprotein complex responsible for the synthesis of proteins in the cell. This is Large ribosomal subunit protein uL29 (rpl35) from Platichthys flesus (European flounder).